The sequence spans 325 residues: MKKKEIIILCGPTASGKSYLGHEFAKAYNGEIINIDSMQVYKETPIITASPSQIYKTEIPYHLYNFLSITEDFSVIKYLKLAAKKIKEIISRGKLPILIGGTGLYINSLVFGYNNIPDITEDLQKQARELHSKIGNIELWNKLEKLDPLAASKINQNDTQRLIRAYEVFKQSGKSIFCFHTLPKEQILSEFNFKIIFLNPERKFLYKTCEQRLQKIFKEGSIDEIALIKKQLIPQDYLNLKAVGVKEILAYLDGNLTLDDALSATQIRTRRYAKRQVTWFKNQIKDKITLKYSNQEECTKILEIFPHLLIERNLKETQNTAPQCI.

An ATP-binding site is contributed by 11-18 (GPTASGKS). A substrate-binding site is contributed by 13 to 18 (TASGKS). 2 interaction with substrate tRNA regions span residues 36–39 (DSMQ) and 160–164 (QRLIR).

The protein belongs to the IPP transferase family. As to quaternary structure, monomer. Mg(2+) is required as a cofactor.

It catalyses the reaction adenosine(37) in tRNA + dimethylallyl diphosphate = N(6)-dimethylallyladenosine(37) in tRNA + diphosphate. In terms of biological role, catalyzes the transfer of a dimethylallyl group onto the adenine at position 37 in tRNAs that read codons beginning with uridine, leading to the formation of N6-(dimethylallyl)adenosine (i(6)A). The chain is tRNA dimethylallyltransferase from Rickettsia canadensis (strain McKiel).